The following is a 446-amino-acid chain: tRNA-2-methylthio-N(6)-dimethylallyladenosine synthase (446 aa).

The MTTase N-terminal domain maps to 3–124 (KKLYIKTYGC…LPELISKVVR (122 aa)). 6 residues coordinate [4Fe-4S] cluster: Cys12, Cys48, Cys87, Cys162, Cys166, and Cys169. Positions 148 to 380 (YPQGASSFIS…QKELAAQQLA (233 aa)) constitute a Radical SAM core domain. In terms of domain architecture, TRAM spans 383 to 446 (ESCIGSTMKV…LNSLSGEIYR (64 aa)).

It belongs to the methylthiotransferase family. MiaB subfamily. In terms of assembly, monomer. [4Fe-4S] cluster is required as a cofactor.

Its subcellular location is the cytoplasm. It catalyses the reaction N(6)-dimethylallyladenosine(37) in tRNA + (sulfur carrier)-SH + AH2 + 2 S-adenosyl-L-methionine = 2-methylsulfanyl-N(6)-dimethylallyladenosine(37) in tRNA + (sulfur carrier)-H + 5'-deoxyadenosine + L-methionine + A + S-adenosyl-L-homocysteine + 2 H(+). In terms of biological role, catalyzes the methylthiolation of N6-(dimethylallyl)adenosine (i(6)A), leading to the formation of 2-methylthio-N6-(dimethylallyl)adenosine (ms(2)i(6)A) at position 37 in tRNAs that read codons beginning with uridine. The chain is tRNA-2-methylthio-N(6)-dimethylallyladenosine synthase from Rickettsia bellii (strain RML369-C).